We begin with the raw amino-acid sequence, 400 residues long: Nicotinate phosphoribosyltransferase (400 aa).

A Phosphohistidine; by autocatalysis modification is found at His-220.

It belongs to the NAPRTase family. Transiently phosphorylated on a His residue during the reaction cycle. Phosphorylation strongly increases the affinity for substrates and increases the rate of nicotinate D-ribonucleotide production. Dephosphorylation regenerates the low-affinity form of the enzyme, leading to product release.

It carries out the reaction nicotinate + 5-phospho-alpha-D-ribose 1-diphosphate + ATP + H2O = nicotinate beta-D-ribonucleotide + ADP + phosphate + diphosphate. It participates in cofactor biosynthesis; NAD(+) biosynthesis; nicotinate D-ribonucleotide from nicotinate: step 1/1. Catalyzes the synthesis of beta-nicotinate D-ribonucleotide from nicotinate and 5-phospho-D-ribose 1-phosphate at the expense of ATP. The chain is Nicotinate phosphoribosyltransferase from Shigella sonnei (strain Ss046).